The primary structure comprises 456 residues: Protein COBRA (456 aa).

A signal peptide spans 1-36 (MESFFSRSTSIVSKLSFLALWIVFLISSSSFTSTEA). 9 N-linked (GlcNAc...) asparagine glycosylation sites follow: asparagine 45, asparagine 170, asparagine 178, asparagine 217, asparagine 242, asparagine 258, asparagine 328, asparagine 343, and asparagine 362. Asparagine 431 carries GPI-anchor amidated asparagine lipidation. A propeptide spans 432–456 (GGSRSQFSFVAAVLLPLLVFFFFSA) (removed in mature form).

It belongs to the COBRA family. As to expression, expressed in roots, stems, leaves, flowers and siliques. Up-regulated in the root zone of rapid longitudinal expansion.

It is found in the lateral cell membrane. In terms of biological role, involved in determining the orientation of cell expansion, probably by playing an important role in cellulose deposition. May act by recruiting cellulose synthesizing complexes to discrete positions on the cell surface. The chain is Protein COBRA (COB) from Arabidopsis thaliana (Mouse-ear cress).